The primary structure comprises 153 residues: 6,7-dimethyl-8-ribityllumazine synthase (153 aa).

5-amino-6-(D-ribitylamino)uracil-binding positions include F22, 56–58, and 80–82; these read AFE and TVI. 85-86 contributes to the (2S)-2-hydroxy-3-oxobutyl phosphate binding site; the sequence is ST. H88 acts as the Proton donor in catalysis. Position 113 (F113) interacts with 5-amino-6-(D-ribitylamino)uracil. Residue R127 participates in (2S)-2-hydroxy-3-oxobutyl phosphate binding.

The protein belongs to the DMRL synthase family. As to quaternary structure, forms an icosahedral capsid composed of 60 subunits, arranged as a dodecamer of pentamers.

The catalysed reaction is (2S)-2-hydroxy-3-oxobutyl phosphate + 5-amino-6-(D-ribitylamino)uracil = 6,7-dimethyl-8-(1-D-ribityl)lumazine + phosphate + 2 H2O + H(+). The protein operates within cofactor biosynthesis; riboflavin biosynthesis; riboflavin from 2-hydroxy-3-oxobutyl phosphate and 5-amino-6-(D-ribitylamino)uracil: step 1/2. In terms of biological role, catalyzes the formation of 6,7-dimethyl-8-ribityllumazine by condensation of 5-amino-6-(D-ribitylamino)uracil with 3,4-dihydroxy-2-butanone 4-phosphate. This is the penultimate step in the biosynthesis of riboflavin. In Actinobacillus pleuropneumoniae serotype 7 (strain AP76), this protein is 6,7-dimethyl-8-ribityllumazine synthase.